The following is a 250-amino-acid chain: Putative apoptosis inhibitor ORF99 (250 aa).

Residues 13 to 78 (RVNSFGGWSK…KFSGDCLYLK (66 aa)) form a BIR repeat.

Its function is as follows. May act as an apoptosis inhibitor. The sequence is that of Putative apoptosis inhibitor ORF99 from Ostreid herpesvirus 1 (isolate France) (OsHV-1).